The primary structure comprises 189 residues: Shikimate kinase (189 aa).

An ATP-binding site is contributed by 22–27; the sequence is ASGKST. S26 contacts Mg(2+). Substrate is bound by residues D44, R68, and G90. R128 contributes to the ATP binding site. R147 lines the substrate pocket.

It belongs to the shikimate kinase family. Monomer. Mg(2+) serves as cofactor.

The protein resides in the cytoplasm. It carries out the reaction shikimate + ATP = 3-phosphoshikimate + ADP + H(+). It participates in metabolic intermediate biosynthesis; chorismate biosynthesis; chorismate from D-erythrose 4-phosphate and phosphoenolpyruvate: step 5/7. In terms of biological role, catalyzes the specific phosphorylation of the 3-hydroxyl group of shikimic acid using ATP as a cosubstrate. This Synechococcus sp. (strain JA-3-3Ab) (Cyanobacteria bacterium Yellowstone A-Prime) protein is Shikimate kinase.